The primary structure comprises 273 residues: Putative pyruvate, phosphate dikinase regulatory protein (273 aa).

153–160 (GVSRTSKS) contributes to the ADP binding site.

This sequence belongs to the pyruvate, phosphate/water dikinase regulatory protein family. PDRP subfamily.

It catalyses the reaction N(tele)-phospho-L-histidyl/L-threonyl-[pyruvate, phosphate dikinase] + ADP = N(tele)-phospho-L-histidyl/O-phospho-L-threonyl-[pyruvate, phosphate dikinase] + AMP + H(+). The catalysed reaction is N(tele)-phospho-L-histidyl/O-phospho-L-threonyl-[pyruvate, phosphate dikinase] + phosphate + H(+) = N(tele)-phospho-L-histidyl/L-threonyl-[pyruvate, phosphate dikinase] + diphosphate. Its function is as follows. Bifunctional serine/threonine kinase and phosphorylase involved in the regulation of the pyruvate, phosphate dikinase (PPDK) by catalyzing its phosphorylation/dephosphorylation. This chain is Putative pyruvate, phosphate dikinase regulatory protein, found in Ehrlichia ruminantium (strain Gardel).